Here is a 447-residue protein sequence, read N- to C-terminus: N-succinylarginine dihydrolase (447 aa).

Residues 19–28 (AGLSFGNEAS), N110, and 137–138 (HR) contribute to the substrate site. E174 is a catalytic residue. Position 212 (R212) interacts with substrate. H248 is a catalytic residue. 2 residues coordinate substrate: D250 and N359. The active-site Nucleophile is the C365.

It belongs to the succinylarginine dihydrolase family. In terms of assembly, homodimer.

The enzyme catalyses N(2)-succinyl-L-arginine + 2 H2O + 2 H(+) = N(2)-succinyl-L-ornithine + 2 NH4(+) + CO2. Its pathway is amino-acid degradation; L-arginine degradation via AST pathway; L-glutamate and succinate from L-arginine: step 2/5. Its function is as follows. Catalyzes the hydrolysis of N(2)-succinylarginine into N(2)-succinylornithine, ammonia and CO(2). This Escherichia coli O1:K1 / APEC protein is N-succinylarginine dihydrolase.